The chain runs to 195 residues: Large ribosomal subunit protein uL5 (195 aa).

The protein belongs to the universal ribosomal protein uL5 family. As to quaternary structure, part of the 50S ribosomal subunit; part of the 5S rRNA/L5/L18/L25 subcomplex. Contacts the 5S rRNA and the P site tRNA. Forms a bridge to the 30S subunit in the 70S ribosome.

This is one of the proteins that bind and probably mediate the attachment of the 5S RNA into the large ribosomal subunit, where it forms part of the central protuberance. In the 70S ribosome it contacts protein S13 of the 30S subunit (bridge B1b), connecting the 2 subunits; this bridge is implicated in subunit movement. Contacts the P site tRNA; the 5S rRNA and some of its associated proteins might help stabilize positioning of ribosome-bound tRNAs. The sequence is that of Large ribosomal subunit protein uL5 from Leifsonia xyli subsp. xyli (strain CTCB07).